The chain runs to 629 residues: Mitochondrial Rho GTPase 1 (629 aa).

At 1-600 (MSTAVRICVC…PRSEEPPADR (600 aa)) the chain is on the cytoplasmic side. Positions 2–170 (STAVRICVCG…FYLCQKAVTH (169 aa)) constitute a Miro 1 domain. Residues 11-18 (GDEGTGKS), 59-63 (DTSAR), and 115-118 (NKSD) each bind GTP. EF-hand domains lie at 186 to 221 (ACVD…SFDK) and 306 to 341 (AGYR…TPGL). Residues Asp199, Asp201, Asp203, Tyr205, Glu210, Asp319, Asp321, Asp323, and Glu330 each contribute to the Ca(2+) site. The Miro 2 domain occupies 421-585 (RNVVLCYILG…FVALAEAATN (165 aa)). Residues 430 to 437 (GSSGAGKS), 466 to 470 (ELQGG), and 535 to 538 (LKAD) each bind GTP. A helical; Anchor for type IV membrane protein membrane pass occupies residues 601-621 (ASLYMALGATACAALAAFMIW). Over 622–629 (RRSTSNAA) the chain is Mitochondrial intermembrane.

It belongs to the mitochondrial Rho GTPase family.

The protein resides in the mitochondrion outer membrane. Functionally, mitochondrial GTPase involved in mitochondrial trafficking. Probably involved in control of anterograde transport of mitochondria and their subcellular distribution. This is Mitochondrial Rho GTPase 1 (gem-1) from Neurospora crassa (strain ATCC 24698 / 74-OR23-1A / CBS 708.71 / DSM 1257 / FGSC 987).